Consider the following 324-residue polypeptide: Beta-ketoacyl-[acyl-carrier-protein] synthase III (324 aa).

Active-site residues include cysteine 112 and histidine 249. Residues 250 to 254 (QANRR) are ACP-binding. Asparagine 279 is an active-site residue.

This sequence belongs to the thiolase-like superfamily. FabH family. Homodimer.

It localises to the cytoplasm. It catalyses the reaction malonyl-[ACP] + acetyl-CoA + H(+) = 3-oxobutanoyl-[ACP] + CO2 + CoA. Its pathway is lipid metabolism; fatty acid biosynthesis. Catalyzes the condensation reaction of fatty acid synthesis by the addition to an acyl acceptor of two carbons from malonyl-ACP. Catalyzes the first condensation reaction which initiates fatty acid synthesis and may therefore play a role in governing the total rate of fatty acid production. Possesses both acetoacetyl-ACP synthase and acetyl transacylase activities. Its substrate specificity determines the biosynthesis of branched-chain and/or straight-chain of fatty acids. The polypeptide is Beta-ketoacyl-[acyl-carrier-protein] synthase III (Streptococcus pyogenes serotype M1).